We begin with the raw amino-acid sequence, 236 residues long: DNA repair protein RecO (236 aa).

The protein belongs to the RecO family.

In terms of biological role, involved in DNA repair and RecF pathway recombination. This is DNA repair protein RecO from Stutzerimonas stutzeri (strain A1501) (Pseudomonas stutzeri).